Here is a 126-residue protein sequence, read N- to C-terminus: Small ribosomal subunit protein uS12 (126 aa).

Positions 1 to 26 (MPTINQLVRKGRASETTKSKSPALQD) are disordered. 3-methylthioaspartic acid is present on D89. The tract at residues 102 to 126 (LDTQGVKDRRQARSKYGAKRAKAAK) is disordered. Residues 113–126 (ARSKYGAKRAKAAK) show a composition bias toward basic residues.

It belongs to the universal ribosomal protein uS12 family. As to quaternary structure, part of the 30S ribosomal subunit. Contacts proteins S8 and S17. May interact with IF1 in the 30S initiation complex.

With S4 and S5 plays an important role in translational accuracy. In terms of biological role, interacts with and stabilizes bases of the 16S rRNA that are involved in tRNA selection in the A site and with the mRNA backbone. Located at the interface of the 30S and 50S subunits, it traverses the body of the 30S subunit contacting proteins on the other side and probably holding the rRNA structure together. The combined cluster of proteins S8, S12 and S17 appears to hold together the shoulder and platform of the 30S subunit. The chain is Small ribosomal subunit protein uS12 from Burkholderia mallei (strain ATCC 23344).